A 206-amino-acid polypeptide reads, in one-letter code: Small ribosomal subunit protein uS4 (206 aa).

Residues 93-153 enclose the S4 RNA-binding domain; that stretch reads TRLDALVLRA…PKSQTMVPFQ (61 aa).

The protein belongs to the universal ribosomal protein uS4 family. Part of the 30S ribosomal subunit. Contacts protein S5. The interaction surface between S4 and S5 is involved in control of translational fidelity.

One of the primary rRNA binding proteins, it binds directly to 16S rRNA where it nucleates assembly of the body of the 30S subunit. In terms of biological role, with S5 and S12 plays an important role in translational accuracy. This is Small ribosomal subunit protein uS4 from Bifidobacterium animalis subsp. lactis (strain AD011).